Consider the following 282-residue polypeptide: Putative phosphoesterase 244L (282 aa).

Residues Asp-45, Asn-80, and His-203 each coordinate a divalent metal cation.

It belongs to the metallophosphoesterase superfamily. IIV-6 244L family.

This is Putative phosphoesterase 244L from Invertebrate iridescent virus 6 (IIV-6).